A 161-amino-acid polypeptide reads, in one-letter code: Large ribosomal subunit protein uL15 (161 aa).

The segment at 1–47 is disordered; sequence MKLHELHDNPGANRKKKRVARGPGSGKGKTAGRGIKGQTSRSGVALN. The span at 23-35 shows a compositional bias: gly residues; the sequence is PGSGKGKTAGRGI.

This sequence belongs to the universal ribosomal protein uL15 family. As to quaternary structure, part of the 50S ribosomal subunit.

In terms of biological role, binds to the 23S rRNA. This Paracoccus denitrificans (strain Pd 1222) protein is Large ribosomal subunit protein uL15.